The following is a 685-amino-acid chain: Probable inactive leucine-rich repeat receptor-like protein kinase At1g66830 (685 aa).

Positions 1-21 (MSQLFLILCFILTHFFAIATS) are cleaved as a signal peptide. The Extracellular portion of the chain corresponds to 22 to 305 (LNDQGLALLS…RRANHHSRLC (284 aa)). 2 N-linked (GlcNAc...) asparagine glycosylation sites follow: asparagine 38 and asparagine 48. LRR repeat units lie at residues 65–89 (DMRV…IGSL), 90–113 (LSLR…LFGL), 115–136 (GLQS…EIGS), 137–161 (LKSL…LIPC), 162–185 (KKLK…LGSN), 186–210 (LVHL…VGSL), 212–234 (NLKG…SLGN), and 235–260 (LPEL…VLLN). A glycan (N-linked (GlcNAc...) asparagine) is linked at asparagine 151. A glycan (N-linked (GlcNAc...) asparagine) is linked at asparagine 193. Asparagine 247 carries an N-linked (GlcNAc...) asparagine glycan. A helical transmembrane segment spans residues 306 to 326 (IILTATGGTVAGIIFLASLFI). Residues 327-685 (YYLRKASARA…ESFEKLVTSI (359 aa)) lie on the Cytoplasmic side of the membrane. The 286-residue stretch at 397–682 (KASAFLLGKS…SVLESFEKLV (286 aa)) folds into the Protein kinase domain. Residues serine 399, serine 480, and serine 590 each carry the phosphoserine modification.

It belongs to the protein kinase superfamily. Ser/Thr protein kinase family.

Its subcellular location is the cell membrane. This Arabidopsis thaliana (Mouse-ear cress) protein is Probable inactive leucine-rich repeat receptor-like protein kinase At1g66830.